The chain runs to 1058 residues: UPF0507 protein YALI0E18612g (1058 aa).

The VPS9 domain occupies 252-394 (TNEDGPLDQA…IGENREQLEA (143 aa)).

The protein belongs to the UPF0507 family.

This is UPF0507 protein YALI0E18612g from Yarrowia lipolytica (strain CLIB 122 / E 150) (Yeast).